A 76-amino-acid chain; its full sequence is DNA-directed RNA polymerase subunit omega (76 aa).

Belongs to the RNA polymerase subunit omega family. As to quaternary structure, the RNAP catalytic core consists of 2 alpha, 1 beta, 1 beta' and 1 omega subunit. When a sigma factor is associated with the core the holoenzyme is formed, which can initiate transcription.

It carries out the reaction RNA(n) + a ribonucleoside 5'-triphosphate = RNA(n+1) + diphosphate. Promotes RNA polymerase assembly. Latches the N- and C-terminal regions of the beta' subunit thereby facilitating its interaction with the beta and alpha subunits. This Staphylococcus carnosus (strain TM300) protein is DNA-directed RNA polymerase subunit omega.